The primary structure comprises 44 residues: Photosystem I reaction center subunit IX (44 aa).

A helical membrane pass occupies residues 7 to 27 (YLSTAPVLAISWLIFVAGLLI).

It belongs to the PsaJ family.

The protein resides in the plastid. Its subcellular location is the chloroplast thylakoid membrane. May help in the organization of the PsaE and PsaF subunits. The chain is Photosystem I reaction center subunit IX from Larix decidua (European larch).